The primary structure comprises 418 residues: 3-isopropylmalate dehydratase large subunit (418 aa).

3 residues coordinate [4Fe-4S] cluster: Cys298, Cys358, and Cys361.

Belongs to the aconitase/IPM isomerase family. LeuC type 2 subfamily. As to quaternary structure, heterodimer of LeuC and LeuD. Requires [4Fe-4S] cluster as cofactor.

The enzyme catalyses (2R,3S)-3-isopropylmalate = (2S)-2-isopropylmalate. Its pathway is amino-acid biosynthesis; L-leucine biosynthesis; L-leucine from 3-methyl-2-oxobutanoate: step 2/4. Functionally, catalyzes the isomerization between 2-isopropylmalate and 3-isopropylmalate, via the formation of 2-isopropylmaleate. This Thermoanaerobacter sp. (strain X514) protein is 3-isopropylmalate dehydratase large subunit.